We begin with the raw amino-acid sequence, 83 residues long: Acylphosphatase (83 aa).

The 83-residue stretch at 1-83 (MIEGRVQRVG…TGDDWFEVRY (83 aa)) folds into the Acylphosphatase-like domain. Active-site residues include Arg12 and Asn30.

This sequence belongs to the acylphosphatase family.

The catalysed reaction is an acyl phosphate + H2O = a carboxylate + phosphate + H(+). In Synechococcus sp. (strain CC9605), this protein is Acylphosphatase (acyP).